A 223-amino-acid chain; its full sequence is Uracil-DNA glycosylase (223 aa).

Aspartate 64 (proton acceptor) is an active-site residue.

Belongs to the uracil-DNA glycosylase (UDG) superfamily. UNG family.

It is found in the cytoplasm. It carries out the reaction Hydrolyzes single-stranded DNA or mismatched double-stranded DNA and polynucleotides, releasing free uracil.. In terms of biological role, excises uracil residues from the DNA which can arise as a result of misincorporation of dUMP residues by DNA polymerase or due to deamination of cytosine. This chain is Uracil-DNA glycosylase, found in Desulfitobacterium hafniense (strain DSM 10664 / DCB-2).